Reading from the N-terminus, the 129-residue chain is Replication initiation control protein YabA (129 aa).

Residues histidine 103, cysteine 105, cysteine 119, and cysteine 122 each coordinate Zn(2+).

It belongs to the YabA family. Homotetramer. Interacts with both DnaA and DnaN, acting as a bridge between these two proteins. Requires Zn(2+) as cofactor.

Its subcellular location is the cytoplasm. It is found in the nucleoid. Its function is as follows. Involved in control of chromosome replication initiation. Inhibits the cooperative binding of DnaA to the oriC region, thus negatively regulating initiation of chromosome replication. Inhibits the ability of DnaA-ATP to form a helix on DNA; does not disassemble preformed DnaA-DNA helices. Decreases the residence time of DnaA on the chromosome at its binding sites (oriC, replication forks and promoter-binding sites). Tethers DnaA to the replication machinery via the DNA polymerase beta sliding clamp subunit (dnaN). Associates with oriC and other DnaA targets on the chromosome in a DnaA-dependent manner. The protein is Replication initiation control protein YabA of Listeria welshimeri serovar 6b (strain ATCC 35897 / DSM 20650 / CCUG 15529 / CIP 8149 / NCTC 11857 / SLCC 5334 / V8).